A 245-amino-acid chain; its full sequence is Demethylmenaquinone methyltransferase (245 aa).

S-adenosyl-L-methionine-binding positions include Thr-69, Asp-90, and 118-119 (DC).

This sequence belongs to the class I-like SAM-binding methyltransferase superfamily. MenG/UbiE family.

It catalyses the reaction a 2-demethylmenaquinol + S-adenosyl-L-methionine = a menaquinol + S-adenosyl-L-homocysteine + H(+). The protein operates within quinol/quinone metabolism; menaquinone biosynthesis; menaquinol from 1,4-dihydroxy-2-naphthoate: step 2/2. In terms of biological role, methyltransferase required for the conversion of demethylmenaquinol (DMKH2) to menaquinol (MKH2). The sequence is that of Demethylmenaquinone methyltransferase from Porphyromonas gingivalis (strain ATCC 33277 / DSM 20709 / CIP 103683 / JCM 12257 / NCTC 11834 / 2561).